Reading from the N-terminus, the 843-residue chain is Lon protease (843 aa).

Residues 1 to 16 (MRERKETAMSDKEKKG) show a composition bias toward basic and acidic residues. Residues 1–22 (MRERKETAMSDKEKKGAGAGAQ) form a disordered region. The Lon N-terminal domain occupies 42-236 (LPILPLRNSV…LVLELLNRKR (195 aa)). ATP is bound at residue 388–395 (GPPGVGKT). In terms of domain architecture, Lon proteolytic spans 627 to 808 (TEIAGVATGL…DEVLQAALEE (182 aa)). Residues S714 and K757 contribute to the active site. The interval 805–843 (ALEENPVGRKPPAAPEPEGEKKPGATPTPPAKKPDEIRV) is disordered.

It belongs to the peptidase S16 family. In terms of assembly, homohexamer. Organized in a ring with a central cavity.

It is found in the cytoplasm. The catalysed reaction is Hydrolysis of proteins in presence of ATP.. In terms of biological role, ATP-dependent serine protease that mediates the selective degradation of mutant and abnormal proteins as well as certain short-lived regulatory proteins. Required for cellular homeostasis and for survival from DNA damage and developmental changes induced by stress. Degrades polypeptides processively to yield small peptide fragments that are 5 to 10 amino acids long. Binds to DNA in a double-stranded, site-specific manner. The polypeptide is Lon protease (Anaeromyxobacter dehalogenans (strain 2CP-C)).